We begin with the raw amino-acid sequence, 265 residues long: Cell adhesion molecule CEACAM7 (265 aa).

A signal peptide spans 1-35 (MGSPSACPYRVCIPWQGLLLTASLLTFWNLPNSAQ). One can recognise an Ig-like V-type domain in the interval 36–142 (TNIDVVPFNV…EEVTRQFYVF (107 aa)). Asn-57, Asn-85, Asn-105, Asn-112, Asn-174, Asn-183, and Asn-198 each carry an N-linked (GlcNAc...) asparagine glycan. In terms of domain architecture, Ig-like C2-type spans 146–233 (PKPSITSNNF…ASRSDPVTLN (88 aa)). An intrachain disulfide couples Cys-168 to Cys-216. Ser-242 carries the GPI-anchor amidated serine lipid modification. Positions 243 to 265 (SPDLSAGTAVSIMIGVLAGMALI) are cleaved as a propeptide — removed in mature form.

It belongs to the immunoglobulin superfamily. CEA family. Homodimer. As to expression, expressed in columnar epithelial cells of the colon (at protein level). Strongly down-regulated in colonic adenocarcinomas.

Its subcellular location is the cell membrane. The protein localises to the apical cell membrane. The chain is Cell adhesion molecule CEACAM7 from Homo sapiens (Human).